Consider the following 484-residue polypeptide: UDP-N-acetylmuramate--L-alanine ligase (484 aa).

123-129 lines the ATP pocket; sequence GTHGKTT.

Belongs to the MurCDEF family.

It localises to the cytoplasm. The catalysed reaction is UDP-N-acetyl-alpha-D-muramate + L-alanine + ATP = UDP-N-acetyl-alpha-D-muramoyl-L-alanine + ADP + phosphate + H(+). It participates in cell wall biogenesis; peptidoglycan biosynthesis. In terms of biological role, cell wall formation. The protein is UDP-N-acetylmuramate--L-alanine ligase of Pseudomonas fluorescens (strain ATCC BAA-477 / NRRL B-23932 / Pf-5).